The primary structure comprises 749 residues: cGMP-dependent protein kinase egl-4 (749 aa).

A coiled-coil region spans residues 30-96; that stretch reads EAHELQKLIP…LEQKAQSAAS (67 aa). The tract at residues 87–111 is disordered; sequence LEQKAQSAASPGQPPSPSPRTDQLG. 3',5'-cyclic GMP is bound by residues 234 to 237, 244 to 245, R349, 358 to 361, 368 to 369, and Y403; these read GELA, RT, and GERA. Positions 438–698 constitute a Protein kinase domain; that stretch reads VKRLATLGVG…VNDIRKHRWF (261 aa). Residues 444 to 452 and K468 contribute to the ATP site; that span reads LGVGGFGRV. A Nuclear localization signal motif is present at residues 461–473; that stretch reads KSKTYALKALKKK. D562 serves as the catalytic Proton acceptor. One can recognise an AGC-kinase C-terminal domain in the interval 699–749; the sequence is MGFDWEGLRTKTLKPPILPKVNNPADVTNFDNYPPDNDVPPDEFSGWDEGF. The tract at residues 723 to 749 is disordered; it reads ADVTNFDNYPPDNDVPPDEFSGWDEGF.

This sequence belongs to the protein kinase superfamily. AGC Ser/Thr protein kinase family. cGMP subfamily. It depends on Mg(2+) as a cofactor. In terms of processing, autophosphorylated.

It localises to the cytoplasm. The protein resides in the nucleus. It catalyses the reaction L-seryl-[protein] + ATP = O-phospho-L-seryl-[protein] + ADP + H(+). The catalysed reaction is L-threonyl-[protein] + ATP = O-phospho-L-threonyl-[protein] + ADP + H(+). Binding of cGMP results in enzyme activation. Its function is as follows. Promotes chemoreceptor gene expression in response to increased cGMP levels by antagonizing the gene repression functions of the class II HDAC hda-4 and the mef-2 transcription factor. Regulates gene expression via recruitment of a histone deacetylase complex containing hda-2, saeg-1 and saeg-2. Represses body size and lifespan through the dbl-1 and insulin pathways, respectively. May also signal through daf-3 and/or daf-5. Role in egg-laying, dauer formation and motility. Regulates behavioral responses to various chemosensory stimuli in sensory neurons. Required for the initiation of long term adaptation to prolonged odor exposure which results in a decrease in odor seeking behavior. May regulate this process by phosphorylating tax-2, a subunit of cyclic nucleotide-gated channel tax-2/tax-4. In ASH sensory neurons, negatively regulates avoidance behavior to some bitter tastants, such as quinine, probably by phosphorylating rgs-2 and rgs-3 which are 2 regulator of G-protein signaling proteins. In AWB sensory neurons, involved in avoidance behavior to some repellent odors. In ASE left (ASEL) sensory neuron, involved in the sensing of environmental alkalinity downstream of receptor-type guanylate cyclase gcy-14. In sensory neurons, involved in the signaling pathway downstream of insulin, TGF-beta and receptor-type guanylate cyclase responsible for inducing quiescence after food intake. Might play a role in aversive olfactory learning in AWC neurons when an odor is associated with food deprivation, depending on the ins-1/age-1 signal from the AIA to the AWC neurons. Probably by regulating neuronal transmission downstream of lin-3 and receptor lin-23 and phospholipase plc-3 in ALA neurons, involved in the decrease in locomotion during the quiescent state that precedes each larval molt. In Caenorhabditis briggsae, this protein is cGMP-dependent protein kinase egl-4.